Here is a 484-residue protein sequence, read N- to C-terminus: uncharacterized protein (484 aa).

Positions Thr47–Phe226 constitute an FAD-binding PCMH-type domain.

This sequence belongs to the FAD-binding oxidoreductase/transferase type 4 family.

This is an uncharacterized protein from Escherichia coli O157:H7.